Here is a 311-residue protein sequence, read N- to C-terminus: Malate dehydrogenase (311 aa).

Residues 7 to 13 (GAAGGIG) and Asp34 contribute to the NAD(+) site. Positions 81 and 87 each coordinate substrate. NAD(+) is bound by residues Asn94 and 117 to 119 (ITN). The substrate site is built by Asn119 and Arg153. His177 functions as the Proton acceptor in the catalytic mechanism. Met227 is a binding site for NAD(+).

Belongs to the LDH/MDH superfamily. MDH type 1 family. As to quaternary structure, homodimer.

It catalyses the reaction (S)-malate + NAD(+) = oxaloacetate + NADH + H(+). In terms of biological role, catalyzes the reversible oxidation of malate to oxaloacetate. This chain is Malate dehydrogenase, found in Histophilus somni (strain 2336) (Haemophilus somnus).